We begin with the raw amino-acid sequence, 168 residues long: MRTQSLYQPHFGHGSYTTRNVAKNTDIGKENGLISELVYNERQPAVAQLLLPLLLQLGKQSRWLLWLTPQQKLSKQWLQQSGLPVDKMVQLSQISPVNTVEAMEKALQTGNYSVVLGWLPELTEEDRLKLRRAAELGNAYGFIMRPQRDISPTHGHCSTLKIHSSLYH.

The interval 106–112 (ALQTGNY) is ftsZ binding. The segment at 161-168 (KIHSSLYH) is lon protease binding.

The protein belongs to the SulA family. In terms of assembly, interacts with FtsZ. Is rapidly cleaved and degraded by the Lon protease once DNA damage is repaired.

Functionally, component of the SOS system and an inhibitor of cell division. Accumulation of SulA causes rapid cessation of cell division and the appearance of long, non-septate filaments. In the presence of GTP, binds a polymerization-competent form of FtsZ in a 1:1 ratio, thus inhibiting FtsZ polymerization and therefore preventing it from participating in the assembly of the Z ring. This mechanism prevents the premature segregation of damaged DNA to daughter cells during cell division. In Serratia marcescens, this protein is Cell division inhibitor SulA.